Reading from the N-terminus, the 297-residue chain is 4-hydroxy-tetrahydrodipicolinate synthase (297 aa).

Residue Thr50 coordinates pyruvate. The active-site Proton donor/acceptor is Tyr138. Lys166 acts as the Schiff-base intermediate with substrate in catalysis. Pyruvate is bound at residue Ile208.

This sequence belongs to the DapA family. In terms of assembly, homotetramer; dimer of dimers.

The protein localises to the cytoplasm. It carries out the reaction L-aspartate 4-semialdehyde + pyruvate = (2S,4S)-4-hydroxy-2,3,4,5-tetrahydrodipicolinate + H2O + H(+). Its pathway is amino-acid biosynthesis; L-lysine biosynthesis via DAP pathway; (S)-tetrahydrodipicolinate from L-aspartate: step 3/4. In terms of biological role, catalyzes the condensation of (S)-aspartate-beta-semialdehyde [(S)-ASA] and pyruvate to 4-hydroxy-tetrahydrodipicolinate (HTPA). The sequence is that of 4-hydroxy-tetrahydrodipicolinate synthase from Gluconobacter oxydans (strain 621H) (Gluconobacter suboxydans).